The sequence spans 269 residues: 1-(5-phosphoribosyl)-5-[(5-phosphoribosylamino)methylideneamino] imidazole-4-carboxamide isomerase (269 aa).

D10 acts as the Proton acceptor in catalysis. D132 functions as the Proton donor in the catalytic mechanism.

The protein belongs to the HisA/HisF family.

Its subcellular location is the cytoplasm. The catalysed reaction is 1-(5-phospho-beta-D-ribosyl)-5-[(5-phospho-beta-D-ribosylamino)methylideneamino]imidazole-4-carboxamide = 5-[(5-phospho-1-deoxy-D-ribulos-1-ylimino)methylamino]-1-(5-phospho-beta-D-ribosyl)imidazole-4-carboxamide. It functions in the pathway amino-acid biosynthesis; L-histidine biosynthesis; L-histidine from 5-phospho-alpha-D-ribose 1-diphosphate: step 4/9. This is 1-(5-phosphoribosyl)-5-[(5-phosphoribosylamino)methylideneamino] imidazole-4-carboxamide isomerase from Xylella fastidiosa (strain Temecula1 / ATCC 700964).